Reading from the N-terminus, the 250-residue chain is Precorrin-4 C(11)-methyltransferase (250 aa).

The protein belongs to the precorrin methyltransferase family.

It carries out the reaction precorrin-4 + S-adenosyl-L-methionine = precorrin-5 + S-adenosyl-L-homocysteine. Its pathway is cofactor biosynthesis; adenosylcobalamin biosynthesis; cob(II)yrinate a,c-diamide from precorrin-2 (aerobic route): step 4/10. Catalyzes the methylation of C-11 in precorrin-4 to form precorrin-5. The chain is Precorrin-4 C(11)-methyltransferase (cobM) from Pseudomonas aeruginosa (strain ATCC 15692 / DSM 22644 / CIP 104116 / JCM 14847 / LMG 12228 / 1C / PRS 101 / PAO1).